The following is a 312-amino-acid chain: Acetyl-coenzyme A carboxylase carboxyl transferase subunit alpha (312 aa).

A CoA carboxyltransferase C-terminal domain is found at 36–286 (NLEKEISKTY…ADYVKKSLNE (251 aa)).

The protein belongs to the AccA family. As to quaternary structure, acetyl-CoA carboxylase is a heterohexamer composed of biotin carboxyl carrier protein (AccB), biotin carboxylase (AccC) and two subunits each of ACCase subunit alpha (AccA) and ACCase subunit beta (AccD).

It localises to the cytoplasm. The enzyme catalyses N(6)-carboxybiotinyl-L-lysyl-[protein] + acetyl-CoA = N(6)-biotinyl-L-lysyl-[protein] + malonyl-CoA. The protein operates within lipid metabolism; malonyl-CoA biosynthesis; malonyl-CoA from acetyl-CoA: step 1/1. Functionally, component of the acetyl coenzyme A carboxylase (ACC) complex. First, biotin carboxylase catalyzes the carboxylation of biotin on its carrier protein (BCCP) and then the CO(2) group is transferred by the carboxyltransferase to acetyl-CoA to form malonyl-CoA. The chain is Acetyl-coenzyme A carboxylase carboxyl transferase subunit alpha from Campylobacter jejuni (strain RM1221).